The primary structure comprises 31 residues: Photosystem II reaction center protein T (31 aa).

A helical transmembrane segment spans residues A3–F23.

This sequence belongs to the PsbT family. As to quaternary structure, PSII is composed of 1 copy each of membrane proteins PsbA, PsbB, PsbC, PsbD, PsbE, PsbF, PsbH, PsbI, PsbJ, PsbK, PsbL, PsbM, PsbT, PsbX, PsbY, Psb30/Ycf12, peripheral proteins PsbO, CyanoQ (PsbQ), PsbU, PsbV and a large number of cofactors. It forms dimeric complexes.

It localises to the cellular thylakoid membrane. In terms of biological role, found at the monomer-monomer interface of the photosystem II (PS II) dimer, plays a role in assembly and dimerization of PSII. PSII is a light-driven water plastoquinone oxidoreductase, using light energy to abstract electrons from H(2)O, generating a proton gradient subsequently used for ATP formation. This Prochlorococcus marinus (strain MIT 9211) protein is Photosystem II reaction center protein T.